We begin with the raw amino-acid sequence, 358 residues long: Molybdenum import ATP-binding protein ModC 2 (358 aa).

An ABC transporter domain is found at 1–234; it reads MPEQGIEAQL…PRLPLNHPDE (234 aa). 35–42 serves as a coordination point for ATP; sequence GRSGSGKT. The 66-residue stretch at 293-358 folds into the Mop domain; the sequence is NSSILNILRV…AQIKSVALME (66 aa).

This sequence belongs to the ABC transporter superfamily. Molybdate importer (TC 3.A.1.8) family. The complex is composed of two ATP-binding proteins (ModC), two transmembrane proteins (ModB) and a solute-binding protein (ModA).

It is found in the cell inner membrane. It carries out the reaction molybdate(out) + ATP + H2O = molybdate(in) + ADP + phosphate + H(+). In terms of biological role, part of the ABC transporter complex ModABC involved in molybdenum import. Responsible for energy coupling to the transport system. This chain is Molybdenum import ATP-binding protein ModC 2, found in Azotobacter vinelandii.